The sequence spans 413 residues: Putative ankyrin repeat protein L92 (413 aa).

ANK repeat units follow at residues 1–28, 32–67, 68–104, 105–134, 137–170, 174–208, 212–242, and 246–275; these read MCACKFATYNSNIGAVKLLLDKGADINC, DGMSALSAVCKNLDLEFRSDFDTIKLLIERGADVNL, TVDGHYTPLMWLIKNLSENDDRFSESKISSIKNLFES, DDDDYFFENKRKNKYNALKLLLDNGANIEA, DGETPLLLACKLSSEITSTKHIKILLKKGAKTNI, DRKTPLMLLCKNCQQYLENEAVDVLIKYGKANINY, IGETALIYLCRISFMSESVQFLLEKGANPNI, and SGNTALHYAVKRHEFEMVEILLRYNASPEI.

The chain is Putative ankyrin repeat protein L92 from Acanthamoeba polyphaga mimivirus (APMV).